We begin with the raw amino-acid sequence, 489 residues long: Rhamnulokinase (489 aa).

Residue 13-17 (ASSGR) participates in ATP binding. Cysteines 68 and 222 form a disulfide. Substrate-binding positions include Gly-83 and 236 to 238 (HDT). Residue Asp-237 is the Proton acceptor of the active site. Thr-259 contributes to the ATP binding site. Asn-296 is a substrate binding site. Gln-304 serves as a coordination point for ATP. The cysteines at positions 353 and 370 are disulfide-linked. Gly-402 contributes to the ATP binding site. The cysteines at positions 413 and 417 are disulfide-linked.

This sequence belongs to the rhamnulokinase family. In terms of assembly, monomer. It depends on Mg(2+) as a cofactor.

It carries out the reaction L-rhamnulose + ATP = L-rhamnulose 1-phosphate + ADP + H(+). Its pathway is carbohydrate degradation; L-rhamnose degradation; glycerone phosphate from L-rhamnose: step 2/3. Involved in the catabolism of L-rhamnose (6-deoxy-L-mannose). Catalyzes the transfer of the gamma-phosphate group from ATP to the 1-hydroxyl group of L-rhamnulose to yield L-rhamnulose 1-phosphate. This Escherichia coli O1:K1 / APEC protein is Rhamnulokinase.